Here is a 377-residue protein sequence, read N- to C-terminus: Unsaturated glucuronyl hydrolase (377 aa).

Asp-88 serves as the catalytic Nucleophile. Catalysis depends on Asp-149, which acts as the Proton donor.

It belongs to the glycosyl hydrolase 88 family. As to quaternary structure, monomer.

Its subcellular location is the cytoplasm. It carries out the reaction beta-D-Delta(4)-GlcA-(1-&gt;4)-beta-D-Glc-(1-&gt;4)-alpha-L-Rha-(1-&gt;3)-D-Glc + H2O = beta-D-Glc-(1-&gt;4)-alpha-L-Rha-(1-&gt;3)-D-Glc + 5-dehydro-4-deoxy-D-glucuronate. With respect to regulation, partially inhibited by divalent metal ions such as calcium, copper, iron and mercury. Catalyzes the hydrolysis of oligosaccharides with unsaturated glucuronyl residues at the non-reducing terminal, to a sugar or an amino sugar, and an unsaturated D-glucuronic acid (GlcA), which is nonenzymatically converted immediately to alpha-keto acid. In Bacillus sp. (strain GL1), this protein is Unsaturated glucuronyl hydrolase (ugl).